We begin with the raw amino-acid sequence, 153 residues long: Probable trafficking protein particle complex subunit 2 (153 aa).

Belongs to the TRAPP small subunits family. Sedlin subfamily. Part of the multisubunit TRAPP (transport protein particle) complex.

It localises to the cytoplasm. The protein resides in the perinuclear region. Its subcellular location is the endoplasmic reticulum. The protein localises to the golgi apparatus. Functionally, may play a role in vesicular transport from endoplasmic reticulum to Golgi. This is Probable trafficking protein particle complex subunit 2 from Nematostella vectensis (Starlet sea anemone).